The chain runs to 349 residues: UPF0324 inner membrane protein YeiH (349 aa).

Over 1–12 (MTELTLQNHRRT) the chain is Periplasmic. A helical membrane pass occupies residues 13–35 (MWHFIPGLALSAVITGVALWGGA). The Cytoplasmic segment spans residues 36-38 (IPA). Residues 39–61 (VAGAGFSALTLAILLGMVIGNTV) form a helical membrane-spanning segment. The Periplasmic portion of the chain corresponds to 62-99 (YPQIWKQCDGGVLFAKQHLLRLGIILYGFRLTFSQIAD). The helical transmembrane segment at 100 to 122 (VGISGIVIDVLTLSSTFMLACFL) threads the bilayer. Over 123–131 (GQKVFGLDR) the chain is Cytoplasmic. The chain crosses the membrane as a helical span at residues 132–151 (HTSWLIGAGSSICGAAAVLA). The Periplasmic portion of the chain corresponds to 152 to 162 (TEPVVKAEASK). The helical transmembrane segment at 163–185 (VTVAVATVVIFGTIAIFLYPAMY) threads the bilayer. Over 186–261 (PLLAHWFSPE…SPATGAEKSK (76 aa)) the chain is Cytoplasmic. A helical transmembrane segment spans residues 262-284 (ITIPWFAIFFIVVAIFNSFHLLP). At 285–290 (KAVVDM) the chain is on the periplasmic side. Residues 291 to 313 (LVTLDTVLLAMAMAALGLTTHVS) traverse the membrane as a helical segment. At 314–322 (ALKKAGAKP) the chain is on the cytoplasmic side. A helical membrane pass occupies residues 323-345 (LLMALALFAWLIIGGGAINVLIH). At 346–349 (SLIA) the chain is on the periplasmic side.

It belongs to the UPF0324 family.

Its subcellular location is the cell inner membrane. In Salmonella typhi, this protein is UPF0324 inner membrane protein YeiH (yeiH).